The following is a 241-amino-acid chain: 2-C-methyl-D-erythritol 4-phosphate cytidylyltransferase (241 aa).

This sequence belongs to the IspD/TarI cytidylyltransferase family. IspD subfamily.

The catalysed reaction is 2-C-methyl-D-erythritol 4-phosphate + CTP + H(+) = 4-CDP-2-C-methyl-D-erythritol + diphosphate. It functions in the pathway isoprenoid biosynthesis; isopentenyl diphosphate biosynthesis via DXP pathway; isopentenyl diphosphate from 1-deoxy-D-xylulose 5-phosphate: step 2/6. Its function is as follows. Catalyzes the formation of 4-diphosphocytidyl-2-C-methyl-D-erythritol from CTP and 2-C-methyl-D-erythritol 4-phosphate (MEP). This Alkaliphilus metalliredigens (strain QYMF) protein is 2-C-methyl-D-erythritol 4-phosphate cytidylyltransferase.